A 189-amino-acid chain; its full sequence is MNIIMGILDQAVSAEEGYFAGGASRKSLMEEMRRIRSKYKATVFGDSGREGMKFKMALLFVLKRVKQKIILEDRLMEVIDSEVAYIIGCVKSITSEPIRVGTVEAVRPIQHEAEHKCAKPRTRANFPMDTSQLLRSWLKENMDNPYPSDAEKAYLCQKTGLGPAQINNWFINARRRILPFMKGKCSNFK.

The segment at residues 119-181 (KPRTRANFPM…NARRRILPFM (63 aa)) is a DNA-binding region (homeobox; TALE-type).

The protein belongs to the TALE/KNOX homeobox family.

The protein localises to the nucleus. The protein is Homeobox protein HD-2 (HD-2) of Encephalitozoon cuniculi (strain GB-M1) (Microsporidian parasite).